We begin with the raw amino-acid sequence, 121 residues long: Flagellar protein FliT (121 aa).

The interval 1–50 is required for homodimerization; sequence MNNAPHLYFAWQQLVEKSQLMLRLATEEQWDELIASEMAYVNAVQEIAHL. A fliD binding region spans residues 60 to 98; the sequence is MQEQLRPMLLLILDNESKVKQLLQIRMDELAKLVGQSSV.

It belongs to the FliT family. Homodimer. Interacts with FliD and FlhC.

The protein localises to the cytoplasm. The protein resides in the cytosol. Dual-function protein that regulates the transcription of class 2 flagellar operons and that also acts as an export chaperone for the filament-capping protein FliD. As a transcriptional regulator, acts as an anti-FlhDC factor; it directly binds FlhC, thus inhibiting the binding of the FlhC/FlhD complex to class 2 promoters, resulting in decreased expression of class 2 flagellar operons. As a chaperone, effects FliD transition to the membrane by preventing its premature polymerization, and by directing it to the export apparatus. The sequence is that of Flagellar protein FliT from Escherichia coli O6:K15:H31 (strain 536 / UPEC).